Here is a 475-residue protein sequence, read N- to C-terminus: Homeobox even-skipped homolog protein 2 (475 aa).

2 disordered regions span residues 82-113 and 155-189; these read PSSE…AEAD and TSAS…SGAD. Residues 83–96 show a composition bias toward low complexity; sequence SSESTVSSEIASAT. Over residues 160–186 the composition is skewed to gly residues; sequence SGLGSLHGGGGGGNSGAAALGGSGSGS. A DNA-binding region (homeobox) is located at residues 191 to 250; the sequence is VRRYRTAFTREQIARLEKEFYRENYVSRPRRCELAAALNLPETTIKVWFQNRRMKDKRQR.

This sequence belongs to the even-skipped homeobox family.

Its subcellular location is the nucleus. The polypeptide is Homeobox even-skipped homolog protein 2 (Evx2) (Mus musculus (Mouse)).